Consider the following 182-residue polypeptide: ATP synthase subunit delta 2 (182 aa).

The protein belongs to the ATPase delta chain family. F-type ATPases have 2 components, F(1) - the catalytic core - and F(0) - the membrane proton channel. F(1) has five subunits: alpha(3), beta(3), gamma(1), delta(1), epsilon(1). F(0) has three main subunits: a(1), b(2) and c(10-14). The alpha and beta chains form an alternating ring which encloses part of the gamma chain. F(1) is attached to F(0) by a central stalk formed by the gamma and epsilon chains, while a peripheral stalk is formed by the delta and b chains.

It is found in the cell inner membrane. Its function is as follows. F(1)F(0) ATP synthase produces ATP from ADP in the presence of a proton or sodium gradient. F-type ATPases consist of two structural domains, F(1) containing the extramembraneous catalytic core and F(0) containing the membrane proton channel, linked together by a central stalk and a peripheral stalk. During catalysis, ATP synthesis in the catalytic domain of F(1) is coupled via a rotary mechanism of the central stalk subunits to proton translocation. Functionally, this protein is part of the stalk that links CF(0) to CF(1). It either transmits conformational changes from CF(0) to CF(1) or is implicated in proton conduction. This is ATP synthase subunit delta 2 from Photobacterium profundum (strain SS9).